Reading from the N-terminus, the 194-residue chain is Prefoldin subunit 3 (194 aa).

It belongs to the prefoldin subunit alpha family. Heterohexamer of two PFD-alpha type and four PFD-beta type subunits. Interacts with itself. Interacts with Vhl and betaTub56D/tubulin beta-1 chain. Interacts with tubulin alpha-beta heterodimers by itself or in complex with Vhl. Does not interact with microtubules (MTs). As to expression, expressed in larval central nervous system (CNS) and pupal testis (at protein level).

It localises to the cytoplasm. Binds specifically to cytosolic chaperonin (c-CPN) and transfers target proteins to it. Binds to nascent polypeptide chain and promotes folding in an environment in which there are many competing pathways for nonnative proteins. Required for tubulin stability and spindle and centrosome formation in cooperation with Vhl. The polypeptide is Prefoldin subunit 3 (mgr) (Drosophila melanogaster (Fruit fly)).